A 445-amino-acid polypeptide reads, in one-letter code: MAALSHRLRSFTRRFSSTRTTQRSGGGANTKVPILYTSPDIDSDPVTLQLFSWGRGASGQLGGGIEEIRMYPSPVANLLFRSDQSFSLAQTPGRIDADSSSFRIGISCGLFHSGLTIDGDLWIWGKGDGGRLGFGQENSVFVPNLNPLFEEHSIRCIALGGLHSVALTHQGDVFTWGYGGFGALGHKVYTRELVPRRVDDSWDCKISAIATSGTHTAAITESGELYMWGREEGDGRLGLGPGRGPNEGGGLSVPSKVKALTVPVASVSCGGFFTMALTKEGQLWNWGANSNYELGRGDNLGGWEPMPVPSLEGVRITQIACGGYHSLALTEEGKVLSWGHGGHGQLGSSSLRNQKVPTEIEALADKKIVFIASGGSSSAAITDGGELWMWGNAKDFQLGVPGLPEIQTTPVEVNFLTEEDECQPHKVISISIGASHALCLVSRSP.

A mitochondrion-targeting transit peptide spans 1–22 (MAALSHRLRSFTRRFSSTRTTQ). RCC1 repeat units follow at residues 47–101 (TLQL…DSSS), 118–169 (DGDL…ALTH), 171–221 (GDVF…AITE), 222–279 (SGEL…ALTK), 280–331 (EGQL…ALTE), 333–383 (GKVL…AITD), and 385–442 (GELW…CLVS).

Interacts with ATM. In terms of tissue distribution, mostly expressed in roots and rosette leaves of young seedlings, and, to a lower extent, in the flowers and siliques of mature plants. Preferentially expressed in the vascular tissues.

The protein localises to the mitochondrion. In terms of biological role, regulates DNA damage response (DDR) synergistically with ATM. Together with ATM, involved in the splicing of the ND2/NAD2 mRNA. Required for the accumulation of mitochondrial respiratory chain complex I. Negative regulator of plant responses to abscisic acid (ABA). May have a pivotal role in vegetative growth and the phase transition from vegetative to reproductive growth. The polypeptide is RCC1 domain-containing protein RUG3, mitochondrial (Arabidopsis thaliana (Mouse-ear cress)).